Consider the following 366-residue polypeptide: ATP-dependent 6-phosphofructokinase (366 aa).

ATP-binding positions include G16, 78 to 79 (RE), and 118 to 121 (GNGT). Positions 74 to 94 (LGTSREKPFKPDPGEKDSEAG) are disordered. Over residues 77–94 (SREKPFKPDPGEKDSEAG) the composition is skewed to basic and acidic residues. N119 is a binding site for Mg(2+). Substrate is bound by residues 141–143 (TID), R178, 185–187 (MGH), E238, R282, and 288–291 (YLQR). Catalysis depends on D143, which acts as the Proton acceptor.

Belongs to the phosphofructokinase type A (PFKA) family. Mixed-substrate PFK group III subfamily. Homodimer or homotetramer. It depends on Mg(2+) as a cofactor.

The protein localises to the cytoplasm. It carries out the reaction beta-D-fructose 6-phosphate + ATP = beta-D-fructose 1,6-bisphosphate + ADP + H(+). It participates in carbohydrate degradation; glycolysis; D-glyceraldehyde 3-phosphate and glycerone phosphate from D-glucose: step 3/4. Catalyzes the phosphorylation of D-fructose 6-phosphate to fructose 1,6-bisphosphate by ATP, the first committing step of glycolysis. The chain is ATP-dependent 6-phosphofructokinase from Spirochaeta thermophila (strain ATCC 49972 / DSM 6192 / RI 19.B1).